The chain runs to 393 residues: Short-chain dehydrogenase/reductase family 42E member 1 (393 aa).

Tyrosine 152 acts as the Proton acceptor in catalysis. NAD(+) is bound at residue lysine 156. The next 2 membrane-spanning stretches (helical) occupy residues 282-302 and 371-391; these read LPLT…FILG and GLLV…SVIL.

It belongs to the 3-beta-HSD family.

The protein localises to the membrane. In Macaca fascicularis (Crab-eating macaque), this protein is Short-chain dehydrogenase/reductase family 42E member 1 (SDR42E1).